Consider the following 221-residue polypeptide: Oxaloacetate tautomerase oaa1, mitochondrial (221 aa).

Mg(2+)-binding residues include E59, E61, and D93.

It belongs to the FAH family. Mg(2+) serves as cofactor. Requires Mn(2+) as cofactor.

The protein resides in the mitochondrion. It localises to the cytoplasm. It carries out the reaction oxaloacetate = enol-oxaloacetate. Its function is as follows. Tautomerase that converts enol-oxaloacetate, a strong inhibitor of succinate dehydrogenase, to the physiological keto form of oxaloacetate. This chain is Oxaloacetate tautomerase oaa1, mitochondrial, found in Schizosaccharomyces pombe (strain 972 / ATCC 24843) (Fission yeast).